Consider the following 288-residue polypeptide: Transformer-2 protein homolog beta (288 aa).

2 disordered regions span residues 1–114 and 196–225; these read MSDS…RANP and TKRP…YDRG. Residue serine 2 is modified to N-acetylserine. Residues serine 2, serine 4, and serine 14 each carry the phosphoserine modification. Low complexity predominate over residues 17-28; it reads ASRSGSAHGSGK. Serine 29 carries the phosphoserine modification. At threonine 33 the chain carries Phosphothreonine. Over residues 59-109 the composition is skewed to basic residues; sequence RSRRSSRRHYTRSRSRSRSHRRSRSRSYSRDYRRRHSHSHSPMSTRRRHVG. A phosphoserine mark is found at serine 83, serine 85, serine 87, serine 95, serine 97, and serine 99. Threonine 103 bears the Phosphothreonine mark. An RRM domain is found at 118–196; the sequence is CCLGVFGLSL…RRIRVDFSIT (79 aa). The linker stretch occupies residues 193–230; the sequence is FSITKRPHTPTPGIYMGRPTYGSSRRRDYYDRGYDRGY. Lysine 197 is covalently cross-linked (Glycyl lysine isopeptide (Lys-Gly) (interchain with G-Cter in SUMO2)). 2 positions are modified to phosphothreonine: threonine 201 and threonine 203. Residues serine 215 and serine 237 each carry the phosphoserine modification. Arginine 241 bears the Asymmetric dimethylarginine; alternate mark. Arginine 241 carries the post-translational modification Dimethylated arginine; alternate. The residue at position 241 (arginine 241) is an Omega-N-methylarginine; alternate. The segment at 242-288 is disordered; it reads GGGGGGGGWRAAQDRDQIYRRRSPSPYYSRGGYRSRSRSRSYSPRRY. Positions 274 to 288 are enriched in basic residues; sequence YRSRSRSRSYSPRRY.

This sequence belongs to the splicing factor SR family. Found in a pre-mRNA exonic splicing enhancer (ESE) complex with TRA2B/SFRS10, SNRNP70, SNRPA1 and SRRM1. Binds to A3 enhancer proteins SFRS4, SFRS5, SFRS6 and SFRS9. Interacts with CPSF6, RBMY1A1, RBMX, RNPS1 and phosphorylated SFRS13A. Interacts with SAFB/SAFB1. Interacts with ILDR1 (via C-terminus) and ILDR2. Phosphorylated in the RS domains.

It localises to the nucleus. Functionally, sequence-specific RNA-binding protein which participates in the control of pre-mRNA splicing. Can either activate or suppress exon inclusion. Acts additively with RBMX to promote exon 7 inclusion of the survival motor neuron SMN2. Activates the splicing of MAPT/Tau exon 10. Alters pre-mRNA splicing patterns by antagonizing the effects of splicing regulators, like RBMX. Binds to the AG-rich SE2 domain in the SMN exon 7 RNA. Binds to pre-mRNA. The chain is Transformer-2 protein homolog beta (TRA2B) from Bos taurus (Bovine).